Here is a 122-residue protein sequence, read N- to C-terminus: Small ribosomal subunit protein bS6 (122 aa).

The tract at residues 97–122 (TAPSPMMKAVQKEDAAKSHRAEAPAA) is disordered. Over residues 106-122 (VQKEDAAKSHRAEAPAA) the composition is skewed to basic and acidic residues.

Belongs to the bacterial ribosomal protein bS6 family.

Binds together with bS18 to 16S ribosomal RNA. The polypeptide is Small ribosomal subunit protein bS6 (Janthinobacterium sp. (strain Marseille) (Minibacterium massiliensis)).